The following is a 972-amino-acid chain: Translation initiation factor IF-2 (972 aa).

The span at H49–K63 shows a compositional bias: basic and acidic residues. 2 disordered regions span residues H49–I86 and D100–A383. A compositionally biased stretch (low complexity) spans G105–A114. Residues E121 to A177 show a composition bias toward basic and acidic residues. Positions K178–Q209 are enriched in low complexity. Basic and acidic residues predominate over residues D210–R261. The segment covering P277 to P286 has biased composition (pro residues). Low complexity predominate over residues K298–G327. The span at S356–K369 shows a compositional bias: gly residues. The tr-type G domain occupies P472 to K641. Positions G481 to T488 are G1. G481–T488 contributes to the GTP binding site. Residues G506–H510 form a G2 region. The tract at residues D527 to G530 is G3. GTP-binding positions include D527–H531 and N581–D584. Positions N581–D584 are G4. Positions S617–K619 are G5.

This sequence belongs to the TRAFAC class translation factor GTPase superfamily. Classic translation factor GTPase family. IF-2 subfamily.

It is found in the cytoplasm. Its function is as follows. One of the essential components for the initiation of protein synthesis. Protects formylmethionyl-tRNA from spontaneous hydrolysis and promotes its binding to the 30S ribosomal subunits. Also involved in the hydrolysis of GTP during the formation of the 70S ribosomal complex. This is Translation initiation factor IF-2 from Burkholderia ambifaria (strain MC40-6).